Here is a 286-residue protein sequence, read N- to C-terminus: UDP-3-O-acyl-N-acetylglucosamine deacetylase (286 aa).

Zn(2+) contacts are provided by His79, His237, and Asp241. Catalysis depends on His264, which acts as the Proton donor.

The protein belongs to the LpxC family. Zn(2+) is required as a cofactor.

It carries out the reaction a UDP-3-O-[(3R)-3-hydroxyacyl]-N-acetyl-alpha-D-glucosamine + H2O = a UDP-3-O-[(3R)-3-hydroxyacyl]-alpha-D-glucosamine + acetate. The protein operates within glycolipid biosynthesis; lipid IV(A) biosynthesis; lipid IV(A) from (3R)-3-hydroxytetradecanoyl-[acyl-carrier-protein] and UDP-N-acetyl-alpha-D-glucosamine: step 2/6. Its function is as follows. Catalyzes the hydrolysis of UDP-3-O-myristoyl-N-acetylglucosamine to form UDP-3-O-myristoylglucosamine and acetate, the committed step in lipid A biosynthesis. This is UDP-3-O-acyl-N-acetylglucosamine deacetylase from Brucella melitensis biotype 2 (strain ATCC 23457).